Here is a 306-residue protein sequence, read N- to C-terminus: Phosphoribosylaminoimidazole-succinocarboxamide synthase (306 aa).

An N-acetylserine modification is found at Ser2.

It belongs to the SAICAR synthetase family. Monomer.

It catalyses the reaction 5-amino-1-(5-phospho-D-ribosyl)imidazole-4-carboxylate + L-aspartate + ATP = (2S)-2-[5-amino-1-(5-phospho-beta-D-ribosyl)imidazole-4-carboxamido]succinate + ADP + phosphate + 2 H(+). It participates in purine metabolism; IMP biosynthesis via de novo pathway; 5-amino-1-(5-phospho-D-ribosyl)imidazole-4-carboxamide from 5-amino-1-(5-phospho-D-ribosyl)imidazole-4-carboxylate: step 1/2. In terms of biological role, catalyzes the reaction of 4-carboxy-5-aminoimidazole ribotide (CAIR) and aspartic acid with the formation of N-succinyl-5-amino-imidazole-4-carboxamide ribotide (SAICAR) in the purine biosynthesis pathway. This chain is Phosphoribosylaminoimidazole-succinocarboxamide synthase (ADE1), found in Saccharomyces cerevisiae (strain ATCC 204508 / S288c) (Baker's yeast).